Consider the following 416-residue polypeptide: (S)-ureidoglycine--glyoxylate transaminase (416 aa).

Position 198 is an N6-(pyridoxal phosphate)lysine (Lys198).

It belongs to the class-V pyridoxal-phosphate-dependent aminotransferase family. In terms of assembly, homodimer. It depends on pyridoxal 5'-phosphate as a cofactor.

It carries out the reaction (S)-2-ureidoglycine + glyoxylate = N-carbamoyl-2-oxoglycine + glycine. It functions in the pathway nitrogen metabolism; (S)-allantoin degradation. Functionally, catalyzes the transamination between an unstable intermediate ((S)-ureidoglycine) and the end product of purine catabolism (glyoxylate) to yield oxalurate and glycine. Glyoxylate is the preferred substrate, but other amino-group acceptors can be used. This chain is (S)-ureidoglycine--glyoxylate transaminase, found in Bacillus subtilis (strain 168).